Reading from the N-terminus, the 40-residue chain is Potassium channel toxin alpha-KTx 12.2 (40 aa).

Disulfide bonds link cysteine 2–cysteine 5, cysteine 10–cysteine 31, cysteine 16–cysteine 36, and cysteine 20–cysteine 38.

This sequence belongs to the short scorpion toxin superfamily. Potassium channel inhibitor family. Alpha-KTx 12 subfamily. As to expression, expressed by the venom gland.

Its subcellular location is the secreted. In terms of biological role, inhibits high conductance calcium-activated potassium channels. Reversibly inhibits Shaker B potassium channels. In Tityus trivittatus (Argentinean scorpion), this protein is Potassium channel toxin alpha-KTx 12.2.